We begin with the raw amino-acid sequence, 331 residues long: Cytosolic sulfotransferase 1 (331 aa).

Lys-74–Trp-79 contributes to the 3'-phosphoadenylyl sulfate binding site. His-143 acts as the Proton acceptor in catalysis. 3'-phosphoadenylyl sulfate is bound by residues Arg-165, Ser-173, Tyr-231, and Arg-297–Gly-299.

Belongs to the sulfotransferase 1 family.

It is found in the cytoplasm. Functionally, sulfotransferase that utilizes 3'-phospho-5'-adenylyl sulfate (PAPS) as sulfonate donor. The protein is Cytosolic sulfotransferase 1 (SOT1) of Arabidopsis thaliana (Mouse-ear cress).